A 219-amino-acid polypeptide reads, in one-letter code: N-(5'-phosphoribosyl)anthranilate isomerase (219 aa).

Belongs to the TrpF family.

It carries out the reaction N-(5-phospho-beta-D-ribosyl)anthranilate = 1-(2-carboxyphenylamino)-1-deoxy-D-ribulose 5-phosphate. It functions in the pathway amino-acid biosynthesis; L-tryptophan biosynthesis; L-tryptophan from chorismate: step 3/5. The polypeptide is N-(5'-phosphoribosyl)anthranilate isomerase (Dehalococcoides mccartyi (strain ATCC BAA-2266 / KCTC 15142 / 195) (Dehalococcoides ethenogenes (strain 195))).